The sequence spans 543 residues: Transmembrane protease serine 13 (543 aa).

Disordered regions lie at residues methionine 1–tyrosine 96 and arginine 109–serine 129. The Cytoplasmic portion of the chain corresponds to methionine 1–proline 143. 2 consecutive repeat copies span residues threonine 14–glutamine 17 and alanine 18–arginine 22. The tract at residues threonine 14–glutamine 49 is 4 X 4 AA repeats of T-P-P-Q. The 8 X 5 AA repeats of A-S-P-A-R stretch occupies residues alanine 18–arginine 69. A 2-2; approximate repeat occupies threonine 23–arginine 27. Positions arginine 27 to alanine 60 are enriched in pro residues. The 1-2; approximate repeat unit spans residues alanine 28–glutamine 31. 5 consecutive repeat copies span residues alanine 32–arginine 36, threonine 37–glutamine 40, alanine 41–arginine 45, threonine 46–glutamine 49, and alanine 50–arginine 54. The stretch at alanine 55–glutamine 59 is one 2-6; approximate repeat. Tandem repeats lie at residues alanine 60–arginine 64 and alanine 65–arginine 69. Composition is skewed to low complexity over residues serine 61 to arginine 94 and arginine 109 to arginine 120. Residues leucine 144–phenylalanine 164 form a helical; Signal-anchor for type II membrane protein membrane-spanning segment. The Extracellular segment spans residues tryptophan 165–serine 543. One can recognise an LDL-receptor class A domain in the interval cysteine 180–cysteine 202. An SRCR domain is found at glutamate 199–arginine 301. Cystine bridges form between cysteine 226–cysteine 290, cysteine 239–cysteine 293, and cysteine 327–cysteine 343. N-linked (GlcNAc...) asparagine glycosylation is found at asparagine 231 and asparagine 268. The region spanning isoleucine 302–glutamate 535 is the Peptidase S1 domain. Histidine 342 serves as the catalytic Charge relay system. Asparagine 381 carries N-linked (GlcNAc...) asparagine glycosylation. Aspartate 390 serves as the catalytic Charge relay system. Asparagine 421 carries N-linked (GlcNAc...) asparagine glycosylation. 3 cysteine pairs are disulfide-bonded: cysteine 424–cysteine 493, cysteine 456–cysteine 472, and cysteine 483–cysteine 511. The active-site Charge relay system is serine 487.

Belongs to the peptidase S1 family. As to quaternary structure, interacts with SPINT1/HAI-1; the interaction promotes the phosphorylation and cell membrane localization of TMPRSS13. Interacts with SPINT2/HAI-2; the interaction promotes the phosphorylation and cell membrane localization of TMPRSS13. Post-translationally, the inactive zymogen is post-translationally modified and then trafficked to the cell surface, whereby it undergoes autocatalytic cleavage resulting in an activated form that is released extracellularly. Phosphorylation is required for localization at the cell surface. Phosphorylation increases following inhibition of protease activity by SPINT2/HAI-2. Expressed in the suprabasal squamous epithelium of the epidermis, hair follicles, oral epithelium, cornea, upper digestive tract, transitional epithelium of the bladder, prostate, heart, intestine, kidney and thymus.

Its subcellular location is the cell membrane. It is found in the secreted. It localises to the cytoplasm. Its activity is regulated as follows. Cleavage of HGF is inhibited by SPINT1/HAI-1 via the BPTI/Kunitz inhibitor 1 domain. In terms of biological role, serine protease. Cleaves the proform of PRSS8/prostasin to form the active protein. Cleaves the proform of HGF to form the active protein which promotes MAPK signaling. Promotes the formation of the stratum corneum and subsequently the epidermal barrier in embryos. The chain is Transmembrane protease serine 13 (Tmprss13) from Mus musculus (Mouse).